We begin with the raw amino-acid sequence, 552 residues long: Urocanate hydratase (552 aa).

NAD(+) is bound by residues 49 to 50 (GG), Q127, 173 to 175 (GMG), D193, 239 to 240 (NA), 260 to 264 (QTSAH), 270 to 271 (YI), and Y319. Residue C407 is part of the active site. G489 lines the NAD(+) pocket.

It belongs to the urocanase family. NAD(+) is required as a cofactor.

The protein localises to the cytoplasm. The enzyme catalyses 4-imidazolone-5-propanoate = trans-urocanate + H2O. It participates in amino-acid degradation; L-histidine degradation into L-glutamate; N-formimidoyl-L-glutamate from L-histidine: step 2/3. Its function is as follows. Catalyzes the conversion of urocanate to 4-imidazolone-5-propionate. The sequence is that of Urocanate hydratase from Bacillus anthracis (strain CDC 684 / NRRL 3495).